Reading from the N-terminus, the 462-residue chain is uncharacterized protein (462 aa).

Residues 22 to 90 (KPIYKALAGQ…VGSGTFVSYD (69 aa)) form the HTH gntR-type domain. The segment at residues 50 to 69 (QRELADYLDLNVSTISKAFK) is a DNA-binding region (H-T-H motif). At K308 the chain carries N6-(pyridoxal phosphate)lysine.

This sequence in the C-terminal section; belongs to the class-I pyridoxal-phosphate-dependent aminotransferase family. Requires pyridoxal 5'-phosphate as cofactor.

This is an uncharacterized protein from Bacillus subtilis (strain 168).